Reading from the N-terminus, the 332-residue chain is Leucine carboxyl methyltransferase 1 (332 aa).

S-adenosyl-L-methionine is bound by residues Arg71, Gly96, Asp120, 169–170 (DL), and Glu196.

Belongs to the methyltransferase superfamily. LCMT family.

It carries out the reaction [phosphatase 2A protein]-C-terminal L-leucine + S-adenosyl-L-methionine = [phosphatase 2A protein]-C-terminal L-leucine methyl ester + S-adenosyl-L-homocysteine. Its function is as follows. Methylates the carboxyl group of the C-terminal leucine residue of protein phosphatase 2A catalytic subunits to form alpha-leucine ester residues. The chain is Leucine carboxyl methyltransferase 1 (Lcmt1) from Rattus norvegicus (Rat).